The following is a 350-amino-acid chain: Beta-hexosaminidase (350 aa).

Substrate contacts are provided by residues D73, R81, R148, and 178–179; that span reads KH. Catalysis depends on H191, which acts as the Proton donor/acceptor. D262 serves as the catalytic Nucleophile.

It belongs to the glycosyl hydrolase 3 family. NagZ subfamily.

It is found in the cytoplasm. It carries out the reaction Hydrolysis of terminal non-reducing N-acetyl-D-hexosamine residues in N-acetyl-beta-D-hexosaminides.. The protein operates within cell wall biogenesis; peptidoglycan recycling. In terms of biological role, plays a role in peptidoglycan recycling by cleaving the terminal beta-1,4-linked N-acetylglucosamine (GlcNAc) from peptide-linked peptidoglycan fragments, giving rise to free GlcNAc, anhydro-N-acetylmuramic acid and anhydro-N-acetylmuramic acid-linked peptides. This is Beta-hexosaminidase from Bordetella avium (strain 197N).